We begin with the raw amino-acid sequence, 526 residues long: Transcription factor MYC1 (526 aa).

Positions 330–351 are disordered; it reads MFPSQNSGLNQDDPSDRRKENE. The segment covering 332-341 has biased composition (polar residues); sequence PSQNSGLNQD. The region spanning 333–382 is the bHLH domain; sequence SQNSGLNQDDPSDRRKENEKFSVLRTMVPTVNEVDKESILNNTIKYLQEL.

In terms of assembly, homodimer. Interacts with MYB75/PAP1, MYB90/PAP2, MYB4, MYB5, MYB6, MYB23, MYB82, MYB113, MYB114, TT2, MYB0/GL1, and MYB66/WER. As to expression, mostly expressed in developing seeds. Also detected in stems and leaves.

It localises to the nucleus. Functionally, trancsription activator, when associated with MYB75/PAP1 or MYB90/PAP2. The chain is Transcription factor MYC1 (BHLH12) from Arabidopsis thaliana (Mouse-ear cress).